Consider the following 101-residue polypeptide: Large ribosomal subunit protein uL24 (101 aa).

Belongs to the universal ribosomal protein uL24 family. Part of the 50S ribosomal subunit.

One of two assembly initiator proteins, it binds directly to the 5'-end of the 23S rRNA, where it nucleates assembly of the 50S subunit. Functionally, one of the proteins that surrounds the polypeptide exit tunnel on the outside of the subunit. The sequence is that of Large ribosomal subunit protein uL24 from Streptococcus thermophilus (strain ATCC BAA-491 / LMD-9).